Reading from the N-terminus, the 340-residue chain is Glycerol-3-phosphate dehydrogenase [NAD(P)+] (340 aa).

Residues serine 11, tryptophan 12, arginine 33, and lysine 106 each contribute to the NADPH site. Sn-glycerol 3-phosphate contacts are provided by lysine 106, glycine 137, and serine 139. Alanine 141 is an NADPH binding site. Sn-glycerol 3-phosphate contacts are provided by lysine 192, aspartate 245, serine 255, arginine 256, and asparagine 257. Lysine 192 (proton acceptor) is an active-site residue. NADPH is bound at residue arginine 256. Valine 280 and glutamate 282 together coordinate NADPH.

Belongs to the NAD-dependent glycerol-3-phosphate dehydrogenase family.

It is found in the cytoplasm. It carries out the reaction sn-glycerol 3-phosphate + NAD(+) = dihydroxyacetone phosphate + NADH + H(+). The enzyme catalyses sn-glycerol 3-phosphate + NADP(+) = dihydroxyacetone phosphate + NADPH + H(+). It functions in the pathway membrane lipid metabolism; glycerophospholipid metabolism. Its function is as follows. Catalyzes the reduction of the glycolytic intermediate dihydroxyacetone phosphate (DHAP) to sn-glycerol 3-phosphate (G3P), the key precursor for phospholipid synthesis. The chain is Glycerol-3-phosphate dehydrogenase [NAD(P)+] from Bacillus anthracis (strain A0248).